We begin with the raw amino-acid sequence, 105 residues long: Met repressor (105 aa).

The protein belongs to the MetJ family. Homodimer.

It is found in the cytoplasm. Functionally, this regulatory protein, when combined with SAM (S-adenosylmethionine) represses the expression of the methionine regulon and of enzymes involved in SAM synthesis. This is Met repressor from Photorhabdus laumondii subsp. laumondii (strain DSM 15139 / CIP 105565 / TT01) (Photorhabdus luminescens subsp. laumondii).